The following is a 432-amino-acid chain: Monooxygenase penA (432 aa).

A helical transmembrane segment spans residues 7 to 29 (FKIAIIGAGPAGLTLASLLTASP). A glycan (N-linked (GlcNAc...) asparagine) is linked at asparagine 33.

This sequence belongs to the aromatic-ring hydroxylase family. The cofactor is FAD.

Its subcellular location is the membrane. Its pathway is secondary metabolite biosynthesis. The protein operates within alkaloid biosynthesis. It participates in mycotoxin biosynthesis. Its function is as follows. Monooxygenase; part of the gene cluster that mediates the biosynthesis of penigequinolones, potent insecticidal alkaloids that contain a highly modified 10-carbon prenyl group. The first stage is catalyzed by the nonribosomal peptide synthetase penN that condenses anthranilic acid and O-methyl-L-tyrosine to produce 4'-methoxycyclopeptin. 4'-methoxycyclopeptin is then converted to 4'-methoxydehydrocyclopeptin by the ketoglutarate-dependent dioxygenase penM through dehydrogenation to form a double bond between C-alpha and C-beta of the O-methyltyrosine side chain. PenM also converts its first product methoxydehydrocyclopeptin to 4'-methoxycyclopenin. The following conversion of 4'methoxycyclopenin into 4'-methoxyviridicatin is catalyzed by the cyclopenase penL. 4'-methoxyviridicatin is the precursor of quinolone natural products, and is further converted to quinolinone B. The prenyltransferase penI then catalyzes the canonical Friedel-Crafts alkylation of quinolinone B with dimethylallyl cation to yield dimethylallyl quinolone, which is subjected to FAD-dependent dehydrogenation by the FAD-linked oxidoreductase penH to yield conjugated aryl diene. The delta(3') double bond then serves as the site of the second alkylation with DMAPP catalyzed by the prenyltransferase penG to yield a carbenium ion intermediate, which can be attacked by H(2)O to yield a styrenyl quinolone containing a C3'-hydroxyprenyl chain, or undergo cyclization to yield yaequinolones J1 and J2. The conversion of the styrenyl quinolone into the tetrahydrofuran-containing yaequinolone C is performed by the FAD-dependent monooxygenase penE and involves epoxidation of the terminal C7'-C8' olefin, followed by epoxide ring opening initiated by the C3' hydroxyl group. The predicted cysteine hydrolase penJ acts as an epoxide hydrolase that enhances the rate of the 5-exo-tet cyclization step, increasing the yield of yaequinolone C. PenF catalyzes the cationic rearrangement of the epoxide formed by penE (before ring opening to produce yaequinolone C) into yaequinolone D. Finally, the short-chain dehydrogenase/reductase (SDR)-like reductase penD, catalyzes both the dehydration of yaequinolone D and the reduction of the resulting oxonium to yield penigequinolone. The chain is Monooxygenase penA from Penicillium thymicola.